We begin with the raw amino-acid sequence, 90 residues long: Putative regulatory protein cce_4590 (90 aa).

It belongs to the RemA family.

This Crocosphaera subtropica (strain ATCC 51142 / BH68) (Cyanothece sp. (strain ATCC 51142)) protein is Putative regulatory protein cce_4590.